A 577-amino-acid chain; its full sequence is Adenine deaminase (577 aa).

Belongs to the metallo-dependent hydrolases superfamily. Adenine deaminase family. The cofactor is Mn(2+).

It catalyses the reaction adenine + H2O + H(+) = hypoxanthine + NH4(+). The chain is Adenine deaminase (adeC) from Bacillus subtilis (strain 168).